A 453-amino-acid polypeptide reads, in one-letter code: MASEVARHLLFQSHITTKTAHTSSQVSDHEQKQKDSPRSLTMSGHVGFESLPDQLVNRSIQQGFCFNILCVGETGIGKSTLIDTLFNTNFEDHESSHFYPHVRLKAQTYELQESNVRLKLTIVNTVGFGDQINKEESYQPIVDYIDAQFEAYLQEELKIKRSLFNYHDSRVHVCLYFISPTGHSLKTLDLLTMKSLDSKVNIIPVIAKADAISKTELQKFKIKLMSELVSNGVQIYQFPTDDETIAKINASMNGHLPFAVVGSMDEVKVGNKMVKARQYPWGVVQVENENHCDFVKLREMLICTNMEDLRDQTHTRHYELYRRRKLEEMGFMDVGPENQPLSLQETYEAKRHEFYGERQRKEEEMKQLFVQRVKEKEAILKEAERELQAKFEHLKRVHQEEKLRLEEKRRLLEEEIMAFSKKKATSEIYQNQTFMTPGSNLRKDKDRKNSNFM.

The tract at residues 18–43 (KTAHTSSQVSDHEQKQKDSPRSLTMS) is disordered. A compositionally biased stretch (basic and acidic residues) spans 27–37 (SDHEQKQKDSP). The region spanning 62–328 (QGFCFNILCV…ELYRRRKLEE (267 aa)) is the Septin-type G domain. The tract at residues 72-79 (GETGIGKS) is G1 motif. Residues 72-79 (GETGIGKS), glycine 127, 208-216 (KADAISKTE), glycine 262, and arginine 277 each bind GTP. A G3 motif region spans residues 124 to 127 (NTVG). Positions 207–210 (AKAD) are G4 motif. Positions 433–453 (TFMTPGSNLRKDKDRKNSNFM) are disordered. A compositionally biased stretch (basic and acidic residues) spans 441-453 (LRKDKDRKNSNFM).

Belongs to the TRAFAC class TrmE-Era-EngA-EngB-Septin-like GTPase superfamily. Septin GTPase family. Septins polymerize into heterooligomeric protein complexes that form filaments, and can associate with cellular membranes, actin filaments and microtubules. GTPase activity is required for filament formation. Interacts with ADGB. Proteolytically cleaved in vitro in a calmodulin-dependent manner.

Its subcellular location is the cytoplasm. The protein resides in the cytoskeleton. The protein localises to the cell projection. It is found in the cilium. It localises to the flagellum. In terms of biological role, filament-forming cytoskeletal GTPase. May play a role in cytokinesis (Potential). This Bos taurus (Bovine) protein is Septin-10.